A 159-amino-acid polypeptide reads, in one-letter code: Putative pre-16S rRNA nuclease (159 aa).

This sequence belongs to the YqgF nuclease family.

It is found in the cytoplasm. Functionally, could be a nuclease involved in processing of the 5'-end of pre-16S rRNA. The polypeptide is Putative pre-16S rRNA nuclease (Bartonella quintana (strain Toulouse) (Rochalimaea quintana)).